The chain runs to 111 residues: DNA-directed RNA polymerase subunit Rpo11 (111 aa).

It belongs to the archaeal Rpo11/eukaryotic RPB11/RPC19 RNA polymerase subunit family. In terms of assembly, part of the RNA polymerase complex.

It is found in the cytoplasm. The enzyme catalyses RNA(n) + a ribonucleoside 5'-triphosphate = RNA(n+1) + diphosphate. Its function is as follows. DNA-dependent RNA polymerase (RNAP) catalyzes the transcription of DNA into RNA using the four ribonucleoside triphosphates as substrates. In Thermoplasma volcanium (strain ATCC 51530 / DSM 4299 / JCM 9571 / NBRC 15438 / GSS1), this protein is DNA-directed RNA polymerase subunit Rpo11.